Reading from the N-terminus, the 314-residue chain is Tetraacyldisaccharide 4'-kinase (314 aa).

61 to 68 (IVGGSGKT) contributes to the ATP binding site.

It belongs to the LpxK family.

The enzyme catalyses a lipid A disaccharide + ATP = a lipid IVA + ADP + H(+). It functions in the pathway glycolipid biosynthesis; lipid IV(A) biosynthesis; lipid IV(A) from (3R)-3-hydroxytetradecanoyl-[acyl-carrier-protein] and UDP-N-acetyl-alpha-D-glucosamine: step 6/6. Functionally, transfers the gamma-phosphate of ATP to the 4'-position of a tetraacyldisaccharide 1-phosphate intermediate (termed DS-1-P) to form tetraacyldisaccharide 1,4'-bis-phosphate (lipid IVA). The chain is Tetraacyldisaccharide 4'-kinase from Aliarcobacter butzleri (strain RM4018) (Arcobacter butzleri).